The following is a 93-amino-acid chain: Small ribosomal subunit protein uS19 (93 aa).

The protein belongs to the universal ribosomal protein uS19 family.

In terms of biological role, protein S19 forms a complex with S13 that binds strongly to the 16S ribosomal RNA. The chain is Small ribosomal subunit protein uS19 from Leptospira interrogans serogroup Icterohaemorrhagiae serovar copenhageni (strain Fiocruz L1-130).